We begin with the raw amino-acid sequence, 445 residues long: Phosphoglucosamine mutase (445 aa).

Ser-102 serves as the catalytic Phosphoserine intermediate. Positions 102, 241, 243, and 245 each coordinate Mg(2+). A Phosphoserine modification is found at Ser-102.

The protein belongs to the phosphohexose mutase family. Requires Mg(2+) as cofactor. Post-translationally, activated by phosphorylation.

It carries out the reaction alpha-D-glucosamine 1-phosphate = D-glucosamine 6-phosphate. Functionally, catalyzes the conversion of glucosamine-6-phosphate to glucosamine-1-phosphate. In Rhodococcus jostii (strain RHA1), this protein is Phosphoglucosamine mutase.